The sequence spans 134 residues: ATP synthase epsilon chain (134 aa).

Positions 100–134 are disordered; it reads NQKLQNENLSEEEKEHYEKQRSRSQALLNLASAKV. The span at 110–120 shows a compositional bias: basic and acidic residues; sequence EEEKEHYEKQR.

Belongs to the ATPase epsilon chain family. F-type ATPases have 2 components, CF(1) - the catalytic core - and CF(0) - the membrane proton channel. CF(1) has five subunits: alpha(3), beta(3), gamma(1), delta(1), epsilon(1). CF(0) has three main subunits: a, b and c.

The protein localises to the cell inner membrane. In terms of biological role, produces ATP from ADP in the presence of a proton gradient across the membrane. The protein is ATP synthase epsilon chain of Sulfurihydrogenibium sp. (strain YO3AOP1).